Here is a 535-residue protein sequence, read N- to C-terminus: Ankyrin repeat domain-containing protein 34C (535 aa).

4 ANK repeats span residues 10–39 (TDGN…YINE), 43–80 (KGET…DPNI), 84–114 (SGKT…DPSL), and 118–147 (TGAS…AKGK). Disordered regions lie at residues 159–181 (SGTK…DRHS) and 214–237 (AGHP…RKVS). Residues 216–225 (HPSSCNTSKA) are compositionally biased toward polar residues. Residue Ser301 is modified to Phosphoserine. The disordered stretch occupies residues 381 to 444 (DLDIQPGPDP…RRRPPHLLER (64 aa)). Ser447 is modified (phosphoserine).

Belongs to the ANKRD34 family.

The chain is Ankyrin repeat domain-containing protein 34C (ANKRD34C) from Homo sapiens (Human).